Consider the following 562-residue polypeptide: Bifunctional coenzyme A synthase (562 aa).

A phosphoserine mark is found at serine 177 and serine 182. Residues 179–357 form a phosphopantetheine adenylyltransferase region; the sequence is VARSAKQPVR…HKRPELPPGC (179 aa). The region spanning 359–562 is the DPCK domain; that stretch reads VIGLTGISGS…KRISEAPSDP (204 aa). 364-371 lines the ATP pocket; sequence GISGSGKS.

It in the central section; belongs to the eukaryotic CoaD family. Monomer. The N-terminus is blocked.

Its subcellular location is the cytoplasm. It is found in the mitochondrion matrix. It catalyses the reaction (R)-4'-phosphopantetheine + ATP + H(+) = 3'-dephospho-CoA + diphosphate. It carries out the reaction 3'-dephospho-CoA + ATP = ADP + CoA + H(+). It functions in the pathway cofactor biosynthesis; coenzyme A biosynthesis; CoA from (R)-pantothenate: step 4/5. The protein operates within cofactor biosynthesis; coenzyme A biosynthesis; CoA from (R)-pantothenate: step 5/5. Functionally, bifunctional enzyme that catalyzes the fourth and fifth sequential steps of CoA biosynthetic pathway. The fourth reaction is catalyzed by the phosphopantetheine adenylyltransferase, coded by the coaD domain; the fifth reaction is catalyzed by the dephospho-CoA kinase, coded by the coaE domain. May act as a point of CoA biosynthesis regulation. In Sus scrofa (Pig), this protein is Bifunctional coenzyme A synthase.